The sequence spans 261 residues: Cytochrome c oxidase subunit 3 (261 aa).

Residues 1–15 (MAHQAHAYHMVDPSP) lie on the Mitochondrial matrix side of the membrane. Residues 16–34 (WPLTGAIAALLLTSGTAVW) traverse the membrane as a helical segment. Residues 35–40 (FHFHSL) are Mitochondrial intermembrane-facing. Residues 41–66 (TLLTLGNVLLLLTMYQWWRDIIREGT) traverse the membrane as a helical segment. Residues 67–72 (FQGHHT) are Mitochondrial matrix-facing. A helical transmembrane segment spans residues 73–105 (PPVQKGLRYGMILFITSEVFFFLGFFWAFYHAS). At 106 to 128 (LAPTPELGGCWPPTGITTLDPFE) the chain is on the mitochondrial intermembrane side. Residues 129-152 (VPLLNTAVLLASGVTVTWAHHSIM) form a helical membrane-spanning segment. At 153-155 (EGE) the chain is on the mitochondrial matrix side. The helical transmembrane segment at 156–183 (RKQTIQALTLTILLGFYFTFLQGMEYYE) threads the bilayer. Over 184-190 (APFTIAD) the chain is Mitochondrial intermembrane. Residues 191 to 223 (GVYGSTFFVATGFHGLHVIIGSTFLAVCLLRQV) traverse the membrane as a helical segment. The Mitochondrial matrix segment spans residues 224-232 (QYHFTSEHH). Residues 233-256 (FGFEAAAWYWHFVDVVWLFLYVSI) form a helical membrane-spanning segment. Over 257 to 261 (YWWGS) the chain is Mitochondrial intermembrane.

This sequence belongs to the cytochrome c oxidase subunit 3 family. Component of the cytochrome c oxidase (complex IV, CIV), a multisubunit enzyme composed of 14 subunits. The complex is composed of a catalytic core of 3 subunits MT-CO1, MT-CO2 and MT-CO3, encoded in the mitochondrial DNA, and 11 supernumerary subunits COX4I, COX5A, COX5B, COX6A, COX6B, COX6C, COX7A, COX7B, COX7C, COX8 and NDUFA4, which are encoded in the nuclear genome. The complex exists as a monomer or a dimer and forms supercomplexes (SCs) in the inner mitochondrial membrane with NADH-ubiquinone oxidoreductase (complex I, CI) and ubiquinol-cytochrome c oxidoreductase (cytochrome b-c1 complex, complex III, CIII), resulting in different assemblies (supercomplex SCI(1)III(2)IV(1) and megacomplex MCI(2)III(2)IV(2)).

The protein localises to the mitochondrion inner membrane. It catalyses the reaction 4 Fe(II)-[cytochrome c] + O2 + 8 H(+)(in) = 4 Fe(III)-[cytochrome c] + 2 H2O + 4 H(+)(out). Functionally, component of the cytochrome c oxidase, the last enzyme in the mitochondrial electron transport chain which drives oxidative phosphorylation. The respiratory chain contains 3 multisubunit complexes succinate dehydrogenase (complex II, CII), ubiquinol-cytochrome c oxidoreductase (cytochrome b-c1 complex, complex III, CIII) and cytochrome c oxidase (complex IV, CIV), that cooperate to transfer electrons derived from NADH and succinate to molecular oxygen, creating an electrochemical gradient over the inner membrane that drives transmembrane transport and the ATP synthase. Cytochrome c oxidase is the component of the respiratory chain that catalyzes the reduction of oxygen to water. Electrons originating from reduced cytochrome c in the intermembrane space (IMS) are transferred via the dinuclear copper A center (CU(A)) of subunit 2 and heme A of subunit 1 to the active site in subunit 1, a binuclear center (BNC) formed by heme A3 and copper B (CU(B)). The BNC reduces molecular oxygen to 2 water molecules using 4 electrons from cytochrome c in the IMS and 4 protons from the mitochondrial matrix. The chain is Cytochrome c oxidase subunit 3 (mt-co3) from Oncorhynchus masou (Cherry salmon).